Consider the following 154-residue polypeptide: Interleukin-2 (154 aa).

The first 20 residues, M1–S20, serve as a signal peptide directing secretion. Residues C78 and C126 are joined by a disulfide bond. A glycan (N-linked (GlcNAc...) asparagine) is linked at N111.

It belongs to the IL-2 family.

The protein localises to the secreted. Its function is as follows. Cytokine produced by activated CD4-positive helper T-cells and to a lesser extend activated CD8-positive T-cells and natural killer (NK) cells that plays pivotal roles in the immune response and tolerance. Binds to a receptor complex composed of either the high-affinity trimeric IL-2R (IL2RA/CD25, IL2RB/CD122 and IL2RG/CD132) or the low-affinity dimeric IL-2R (IL2RB and IL2RG). Interaction with the receptor leads to oligomerization and conformation changes in the IL-2R subunits resulting in downstream signaling starting with phosphorylation of JAK1 and JAK3. In turn, JAK1 and JAK3 phosphorylate the receptor to form a docking site leading to the phosphorylation of several substrates including STAT5. This process leads to activation of several pathways including STAT, phosphoinositide-3-kinase/PI3K and mitogen-activated protein kinase/MAPK pathways. Functions as a T-cell growth factor and can increase NK-cell cytolytic activity as well. Promotes strong proliferation of activated B-cells and subsequently immunoglobulin production. Plays a pivotal role in regulating the adaptive immune system by controlling the survival and proliferation of regulatory T-cells, which are required for the maintenance of immune tolerance. Moreover, participates in the differentiation and homeostasis of effector T-cell subsets, including Th1, Th2, Th17 as well as memory CD8-positive T-cells. This chain is Interleukin-2 (IL2), found in Felis catus (Cat).